We begin with the raw amino-acid sequence, 117 residues long: Large-conductance mechanosensitive channel (117 aa).

3 helical membrane-spanning segments follow: residues 7 to 27 (EFALKGNVLDLAIAVVMGAAF), 30 to 50 (IVTSLVTYIIMPLIGKIFGSV), and 64 to 84 (GLFIQSIIDFIIVAIALFIFV).

It belongs to the MscL family. Homopentamer.

It is found in the cell membrane. Channel that opens in response to stretch forces in the membrane lipid bilayer. May participate in the regulation of osmotic pressure changes within the cell. The chain is Large-conductance mechanosensitive channel from Staphylococcus haemolyticus (strain JCSC1435).